The primary structure comprises 62 residues: Defensin BmKDfsin4 (62 aa).

The N-terminal stretch at 1-24 (MKTIVLLFVLALVFCTLEMGIVEA) is a signal peptide. 3 disulfide bridges follow: C28–C49, C35–C57, and C39–C59.

Belongs to the invertebrate defensin family. Type 2 subfamily.

The protein localises to the secreted. Functionally, dual-function peptide with antimicrobial and potassium channel-blocking activities. Shows inhibitory activity against Gram-positive bacteria such as S.aureus, B.subtilis, and M.luteus as well as methicillin-resistant S.aureus (MIC=0.1-20 uM). Does not act on bacteria by disrupting membranes. Also moderately inhibits Kv1.1/KCNA1 (25.2% inhibition at 1 uM), Kv1.2/KCNA2 (30.5% inhibition at 1 uM), and Kv1.3/KCNA3 potassium channels (IC(50)=510.2 nM, 61% inhibition at 1 uM). Inhibits potassium channels by interacting with the pore region. Does not show hemolytic activity. In vitro, dose-dependently decreases the production of Hepatitis B virus (HBV) DNA and HBV viral proteins in both culture medium and cell lysate. This is Defensin BmKDfsin4 from Olivierus martensii (Manchurian scorpion).